Consider the following 486-residue polypeptide: MSHTAKSKTLQELDIEDIKETNPLLNLVQGQRIVQVPELVLESGVVLNNFPIAYKTWGTLNEACDNVLVICHALTGSADVADWWGPLLGNDLAFDPSRFFIICLNSMGSPYGSFSPLTINEQTGTRYGPEFPLCTVRDDVRAHRIVLDSLGVKSIACVIGGSMGGMLSLEWTAMYGNEYVKNMVALATSARHSAWCISWSEAQRQSIYSDPNYLDGYYPVEEQPVAGLSAARMSALLTYRTRNSFENKFSRRSPSIAQQQKAQKAEVRKPSTVSEHSLQIHNDGYKCKANGAIAGISGQKRQSVVSTTSSSDSLTSQSSMTSVSSVTGEVKDIKPAQTYFSAQSYLRYQGTKFINRFDANCYIAITRKLDTHDLARDRVEDITKVLSAIEQPSLIIGIQSDGLFTYSEQEFLAEYIPNSQLEKIESPEGHDAFLLEFKLINKLIVNFLKTNCKNIMDAKPRTWGGDVGNDETKTSVFGEAEEVTNW.

The 371-residue stretch at 66–436 folds into the AB hydrolase-1 domain; it reads NVLVICHALT…PEGHDAFLLE (371 aa). Ser162 is an active-site residue. Ser162 (nucleophile) is an active-site residue. The disordered stretch occupies residues 248-274; sequence KFSRRSPSIAQQQKAQKAEVRKPSTVS. Residues 250 to 262 are compositionally biased toward polar residues; that stretch reads SRRSPSIAQQQKA. Active-site residues include Asp401 and His430.

It belongs to the AB hydrolase superfamily. MetX family.

The catalysed reaction is L-homoserine + acetyl-CoA = O-acetyl-L-homoserine + CoA. Its pathway is amino-acid biosynthesis; L-methionine biosynthesis via de novo pathway; O-acetyl-L-homoserine from L-homoserine: step 1/1. Its function is as follows. Commits homoserine to the methionine biosynthesis pathway by catalyzing its O-acetylation. The protein is Homoserine O-acetyltransferase (MET2) of Saccharomyces pastorianus (Lager yeast).